The following is a 294-amino-acid chain: tRNA dimethylallyltransferase (294 aa).

10-17 (GPTAVGKT) serves as a coordination point for ATP. 12–17 (TAVGKT) contacts substrate. The interaction with substrate tRNA stretch occupies residues 35-38 (DSQQ).

This sequence belongs to the IPP transferase family. In terms of assembly, monomer. The cofactor is Mg(2+).

It carries out the reaction adenosine(37) in tRNA + dimethylallyl diphosphate = N(6)-dimethylallyladenosine(37) in tRNA + diphosphate. Catalyzes the transfer of a dimethylallyl group onto the adenine at position 37 in tRNAs that read codons beginning with uridine, leading to the formation of N6-(dimethylallyl)adenosine (i(6)A). This is tRNA dimethylallyltransferase from Streptococcus pneumoniae (strain P1031).